The sequence spans 769 residues: Endonuclease MutS2 (769 aa).

Residue 335-342 (GGNAGGKT) coordinates ATP. One can recognise a Smr domain in the interval 694–769 (IDLRGKRADV…GDGMTEVELV (76 aa)).

It belongs to the DNA mismatch repair MutS family. MutS2 subfamily. As to quaternary structure, homodimer. Binds to stalled ribosomes, contacting rRNA.

Endonuclease that is involved in the suppression of homologous recombination and thus may have a key role in the control of bacterial genetic diversity. In terms of biological role, acts as a ribosome collision sensor, splitting the ribosome into its 2 subunits. Detects stalled/collided 70S ribosomes which it binds and splits by an ATP-hydrolysis driven conformational change. Acts upstream of the ribosome quality control system (RQC), a ribosome-associated complex that mediates the extraction of incompletely synthesized nascent chains from stalled ribosomes and their subsequent degradation. Probably generates substrates for RQC. The sequence is that of Endonuclease MutS2 from Maridesulfovibrio salexigens (strain ATCC 14822 / DSM 2638 / NCIMB 8403 / VKM B-1763) (Desulfovibrio salexigens).